The sequence spans 752 residues: Conserved oligomeric Golgi complex subunit 6 (752 aa).

Disordered stretches follow at residues 1 to 36, 601 to 620, and 702 to 736; these read MASY…RSNA, SSTN…KQPQ, and VTRD…GLGL. Over residues 9–25 the composition is skewed to low complexity; that stretch reads AASSHVSTRSSSPASSP. Over residues 601–619 the composition is skewed to polar residues; sequence SSTNGPSDTANDGQQQKQP. The segment covering 702–721 has biased composition (basic and acidic residues); the sequence is VTRDRAVEDDSASDSDKDKD.

The protein belongs to the COG6 family.

The protein localises to the golgi apparatus membrane. Acts as a component of the peripheral membrane COG complex that is involved in intra-Golgi protein trafficking. COG is located at the cis-Golgi, and regulates tethering of retrograde intra-Golgi vesicles and possibly a number of other membrane trafficking events. The polypeptide is Conserved oligomeric Golgi complex subunit 6 (cog6) (Aspergillus terreus (strain NIH 2624 / FGSC A1156)).